Consider the following 164-residue polypeptide: Arginine repressor (164 aa).

It belongs to the ArgR family.

The protein resides in the cytoplasm. It participates in amino-acid biosynthesis; L-arginine biosynthesis [regulation]. Its function is as follows. Regulates arginine biosynthesis genes. In Thermus thermophilus (strain ATCC BAA-163 / DSM 7039 / HB27), this protein is Arginine repressor.